The chain runs to 798 residues: Integrin beta-1-B (798 aa).

A signal peptide spans 1–21 (MARYPVFTFVFLICLVLCTNA). Topologically, residues 22–727 (QQGGTECLKA…VKEPECPSGP (706 aa)) are extracellular. Positions 27-77 (ECLKANAKSCGECIQAGPNCGWCTKVDFLQEGEPTSARCDDLAALKTKGCP) constitute a PSI domain. 28 cysteine pairs are disulfide-bonded: C28–C46, C36–C464, C39–C65, C49–C76, C206–C212, C260–C300, C400–C414, C434–C462, C466–C486, C477–C489, C491–C500, C502–C533, C516–C531, C525–C536, C538–C553, C555–C576, C560–C574, C568–C579, C581–C590, C592–C615, C599–C613, C607–C618, C620–C630, C633–C636, C640–C691, C646–C665, C649–C661, and C699–C723. Positions 77 to 106 (PEDDIQNPRGRKQKLKDIPITSKGKGERMD) are disordered. 2 N-linked (GlcNAc...) asparagine glycosylation sites follow: N109 and N131. Residues 139–377 (DYPIDLYYLM…QLIIDSYNSL (239 aa)) enclose the VWFA domain. The Mg(2+) site is built by S151 and S153. Residues S153, D156, D157, and E188 each contribute to the Ca(2+) site. N-linked (GlcNAc...) asparagine glycosylation is found at N211 and N223. Residues N243, D245, P247, and E248 each coordinate Ca(2+). E248 is a Mg(2+) binding site. N268 and N362 each carry an N-linked (GlcNAc...) asparagine glycan. N416 carries an N-linked (GlcNAc...) asparagine glycan. I-EGF domains follow at residues 466–501 (CQDK…KECE), 502–554 (CSTD…KYCE), 555–591 (CDNF…SACD), and 592–631 (CSED…PTCE). N481 is a glycosylation site (N-linked (GlcNAc...) asparagine). N520 carries N-linked (GlcNAc...) asparagine glycosylation. N584 carries an N-linked (GlcNAc...) asparagine glycan. N669 carries N-linked (GlcNAc...) asparagine glycosylation. The chain crosses the membrane as a helical span at residues 728–751 (DIIPIVAGVVAGIVLIGLALLLIW). Residues 752-798 (KLLMIIHDRREFAKFEKEKMNAKWDTGENPIYKSAVATVVNPKYEGK) are Cytoplasmic-facing. Y783 carries the phosphotyrosine modification.

The protein belongs to the integrin beta chain family. Heterodimer of an alpha and a beta subunit.

The protein localises to the cell membrane. Its subcellular location is the cell projection. It localises to the invadopodium membrane. It is found in the ruffle membrane. The protein resides in the melanosome. The protein localises to the cleavage furrow. Its subcellular location is the lamellipodium. It localises to the ruffle. Functionally, beta integrins associate with alpha subunits to form receptor complexes that recognize the sequence R-G-D in a wide array of ligands. May be involved in osteoblast compaction. May play role in myoblast differentiation and fusion during skeletal myogenesis. This chain is Integrin beta-1-B (itgb1-b), found in Xenopus laevis (African clawed frog).